A 431-amino-acid polypeptide reads, in one-letter code: Trigger factor (431 aa).

One can recognise a PPIase FKBP-type domain in the interval 163–248 (GDTVVIDYAG…IHEVKGKELP (86 aa)).

Belongs to the FKBP-type PPIase family. Tig subfamily.

It is found in the cytoplasm. It catalyses the reaction [protein]-peptidylproline (omega=180) = [protein]-peptidylproline (omega=0). Functionally, involved in protein export. Acts as a chaperone by maintaining the newly synthesized protein in an open conformation. Functions as a peptidyl-prolyl cis-trans isomerase. The chain is Trigger factor from Latilactobacillus sakei subsp. sakei (strain 23K) (Lactobacillus sakei subsp. sakei).